Consider the following 372-residue polypeptide: Virion morphogenesis protein OPG132 (372 aa).

The protein belongs to the orthopoxvirus OPG132 family.

The protein localises to the host cytoplasm. It is found in the virion. Its function is as follows. Lipid-bound viral membrane assembly protein that plays an essential role in immature virion (IV) to mature virion (MV) transition. Functions in both crescent-shaped viral membranes formation and its enclosure to form immature virions. In addition, participates in targeting mature virion proteins to sites of virion assembly to ensure their correct localization. The sequence is that of Virion morphogenesis protein OPG132 (OPG132) from Homo sapiens (Human).